A 275-amino-acid chain; its full sequence is NADH-quinone oxidoreductase subunit E 1 (275 aa).

Positions 99, 104, 140, and 144 each coordinate [2Fe-2S] cluster. The segment at 200–275 (LQAPEPVEEK…DKSKPAKKPR (76 aa)) is disordered. Over residues 206–221 (VEEKKSVRASKAKDEQ) the composition is skewed to basic and acidic residues. The span at 231–242 (AKPSTATDVTNP) shows a compositional bias: polar residues. A compositionally biased stretch (low complexity) spans 243–256 (TLKTPATARKAAAK). Residues 258–269 (VKIEGETVDKSK) are compositionally biased toward basic and acidic residues.

This sequence belongs to the complex I 24 kDa subunit family. [2Fe-2S] cluster is required as a cofactor.

The catalysed reaction is a quinone + NADH + 5 H(+)(in) = a quinol + NAD(+) + 4 H(+)(out). Its function is as follows. NDH-1 shuttles electrons from NADH, via FMN and iron-sulfur (Fe-S) centers, to quinones in the respiratory chain. The immediate electron acceptor for the enzyme in this species is believed to be ubiquinone. Couples the redox reaction to proton translocation (for every two electrons transferred, four hydrogen ions are translocated across the cytoplasmic membrane), and thus conserves the redox energy in a proton gradient. The chain is NADH-quinone oxidoreductase subunit E 1 (nuoE1) from Rhizobium meliloti (strain 1021) (Ensifer meliloti).